The chain runs to 206 residues: Histidine biosynthesis bifunctional protein HisIE (206 aa).

The tract at residues 1 to 117 (MGSNEVATGD…SCFPSAPGQF (117 aa)) is phosphoribosyl-AMP cyclohydrolase. The interval 118–206 (LGSLDALVAE…AAALLESRHQ (89 aa)) is phosphoribosyl-ATP pyrophosphohydrolase.

It in the N-terminal section; belongs to the PRA-CH family. The protein in the C-terminal section; belongs to the PRA-PH family.

The protein localises to the cytoplasm. It catalyses the reaction 1-(5-phospho-beta-D-ribosyl)-ATP + H2O = 1-(5-phospho-beta-D-ribosyl)-5'-AMP + diphosphate + H(+). The enzyme catalyses 1-(5-phospho-beta-D-ribosyl)-5'-AMP + H2O = 1-(5-phospho-beta-D-ribosyl)-5-[(5-phospho-beta-D-ribosylamino)methylideneamino]imidazole-4-carboxamide. The protein operates within amino-acid biosynthesis; L-histidine biosynthesis; L-histidine from 5-phospho-alpha-D-ribose 1-diphosphate: step 2/9. It functions in the pathway amino-acid biosynthesis; L-histidine biosynthesis; L-histidine from 5-phospho-alpha-D-ribose 1-diphosphate: step 3/9. The chain is Histidine biosynthesis bifunctional protein HisIE from Xanthomonas axonopodis pv. citri (strain 306).